The primary structure comprises 462 residues: Nuclear factor interleukin-3-regulated protein (462 aa).

A Glycyl lysine isopeptide (Lys-Gly) (interchain with G-Cter in SUMO2) cross-link involves residue K24. One can recognise a bZIP domain in the interval 73–136 (DAMYWEKRRK…GLISSTAYAQ (64 aa)). The basic motif stretch occupies residues 79 to 95 (KRRKNNEAAKRSREKRR). Positions 99 to 106 (LVLENKLI) are leucine-zipper. Disordered stretches follow at residues 189–237 (DVSE…DDRG) and 258–302 (SPPL…IHSP). Positions 201–210 (ESSVQGSCRS) are enriched in polar residues. Residue K214 forms a Glycyl lysine isopeptide (Lys-Gly) (interchain with G-Cter in SUMO2) linkage. A Glycyl lysine isopeptide (Lys-Gly) (interchain with G-Cter in SUMO1); alternate cross-link involves residue K219. Residue K219 forms a Glycyl lysine isopeptide (Lys-Gly) (interchain with G-Cter in SUMO2); alternate linkage. Positions 227–237 (SYTREPRDDRG) are enriched in basic and acidic residues. Residues 264–274 (VNRSSSNSPRT) show a composition bias toward polar residues. Residues 299–363 (IHSPVELKHV…PIDMTSKRHF (65 aa)) are necessary for transcriptional repression and sufficient for interaction with DR1. The residue at position 301 (S301) is a Phosphoserine. Residues K306, K314, K326, K332, K337, and K350 each participate in a glycyl lysine isopeptide (Lys-Gly) (interchain with G-Cter in SUMO2) cross-link. At S353 the chain carries Phosphoserine. Glycyl lysine isopeptide (Lys-Gly) (interchain with G-Cter in SUMO2) cross-links involve residues K360, K394, K401, K406, K412, K419, K424, K434, and K448.

Belongs to the bZIP family. NFIL3 subfamily. As to quaternary structure, homodimer. Binds DNA as a dimer. Interacts with DR1. Interacts with PER2 and CRY2. Interacts with NR0B2. Interacts with MYSM1. As to expression, expressed in bladder stomach, thyroid, spinal cord, lymph node, trachea, adrenal gland, bone marrow and muscle.

It localises to the nucleus. Acts as a transcriptional regulator that recognizes and binds to the sequence 5'-[GA]TTA[CT]GTAA[CT]-3', a sequence present in many cellular and viral promoters. Represses transcription from promoters with activating transcription factor (ATF) sites. Represses promoter activity in osteoblasts. Represses transcriptional activity of PER1. Represses transcriptional activity of PER2 via the B-site on the promoter. Activates transcription from the interleukin-3 promoter in T-cells. Competes for the same consensus-binding site with PAR DNA-binding factors (DBP, HLF and TEF). Component of the circadian clock that acts as a negative regulator for the circadian expression of PER2 oscillation in the cell-autonomous core clock. Protects pro-B cells from programmed cell death. Represses the transcription of CYP2A5. Positively regulates the expression and activity of CES2 by antagonizing the repressive action of NR1D1 on CES2. Required for the development of natural killer cell precursors. This chain is Nuclear factor interleukin-3-regulated protein (NFIL3), found in Homo sapiens (Human).